The following is a 183-amino-acid chain: Protein vem-1 (183 aa).

Residues 9–29 (FTMYDAVFLVVVLGFFFYWLT) form a helical membrane-spanning segment. The region spanning 47 to 146 (MSDMTVEELR…FKYLTVGRLV (100 aa)) is the Cytochrome b5 heme-binding domain.

Belongs to the cytochrome b5 family. MAPR subfamily. In terms of assembly, interacts with unc-40 (via cytoplasmic domain). As to expression, expressed in the AVG pioneer midline neuron and in several nerve ring neurons that extend projecting axons into the right ventral nerve cord.

The protein resides in the membrane. The protein localises to the cell projection. It localises to the axon. Its function is as follows. Transmembrane protein required for the axon guidance of a subset of ventral nerve cord-associated interneurons and motor neurons. May function with the netrin receptor unc-40 in axon guidance. The chain is Protein vem-1 from Caenorhabditis elegans.